Here is an 88-residue protein sequence, read N- to C-terminus: Pigment dispersing factor homolog pdf-1 (88 aa).

The signal sequence occupies residues 1–21 (MNRFIISMIALLAVFCAVSTA).

The protein localises to the secreted. In terms of biological role, probable ligand of isoforms a and b of the calcitonin receptor-like protein, pdfr-1, a G-protein coupled receptor. May not signal through isoform c of pdfr-1. Involved in locomotion; more specifically mate searching behavior of males, independent of nutritional status. Involved in regulating the male-specific expression of TGFbeta-like daf-7 in the ASJ chemosensory neurons. Plays a role in circadian rhythms of locomotor activity. Involved in mediating arousal from the sleep-like state called lethargus, which occurs during molting between larval and adult stages, in part by regulating touch sensitivity, and working in concert with neuropeptide flp-2. In the presence of food, plays a role in initiating and extending exploratory roaming behavior, in opposition to 5-hydroxytryptamine (serotonin) signaling. The protein is Pigment dispersing factor homolog pdf-1 of Caenorhabditis elegans.